The sequence spans 130 residues: Small ribosomal subunit protein uS8 (130 aa).

The protein belongs to the universal ribosomal protein uS8 family. As to quaternary structure, part of the 30S ribosomal subunit. Contacts proteins S5 and S12.

One of the primary rRNA binding proteins, it binds directly to 16S rRNA central domain where it helps coordinate assembly of the platform of the 30S subunit. This is Small ribosomal subunit protein uS8 from Yersinia enterocolitica serotype O:8 / biotype 1B (strain NCTC 13174 / 8081).